The chain runs to 172 residues: Protein PLASTID REDOX INSENSITIVE 2, chloroplastic (172 aa).

The N-terminal 54 residues, 1 to 54 (MAARLWAAAVAPATLNPPLLTLSASSSPSSSRLRRSVLGRLRSRAPRPADFVCR), are a transit peptide targeting the chloroplast.

It is found in the plastid. The protein localises to the chloroplast stroma. Its subcellular location is the chloroplast nucleoid. Its function is as follows. Required for the activity of the plastid-encoded RNA polymerase (PEP) and full expression of genes transcribed by PEP. This Oryza sativa subsp. japonica (Rice) protein is Protein PLASTID REDOX INSENSITIVE 2, chloroplastic.